Consider the following 1092-residue polypeptide: Probable cellulose synthase A catalytic subunit 5 [UDP-forming] (1092 aa).

Over 1-279 (MEASAGLVAG…SSSLVNPYRM (279 aa)) the chain is Cytoplasmic. Cysteine 39, cysteine 42, cysteine 58, cysteine 61, cysteine 66, cysteine 69, cysteine 81, and cysteine 84 together coordinate Zn(2+). The segment at 39–85 (CQICGDDVGLTPDGEPFVACNECAFPVCRDCYEYERREGTQNCPQCK) adopts an RING-type; degenerate zinc-finger fold. A helical membrane pass occupies residues 280–300 (IIIIRLVVLGFFFHYRVMHPV). At 301–302 (PD) the chain is on the extracellular side. A helical membrane pass occupies residues 303–323 (AFALWLISVICEIWFAMSWIL). Over 324–868 (DQFPKWFPIE…CLERFSYINS (545 aa)) the chain is Cytoplasmic. UDP-alpha-D-glucose contacts are provided by serine 362, lysine 368, glutamate 369, and aspartate 398. The active site involves aspartate 398. A coiled-coil region spans residues 450–479 (NFVRERRAMKREYEEFKVRINALVAKAQKV). Lysine 539 lines the UDP-alpha-D-glucose pocket. Lysine 540 and aspartate 564 together coordinate Mn(2+). Residue aspartate 792 is part of the active site. The helical transmembrane segment at 869 to 889 (IVYPWTSIPLLAYCTLPAICL) threads the bilayer. The Extracellular portion of the chain corresponds to 890 to 901 (LTGKFITPELTN). A helical membrane pass occupies residues 902–922 (IASLWFMSLFICIFATGILEM). The Cytoplasmic segment spans residues 923–938 (RWSGVGIDDWWRNEQF). A helical membrane pass occupies residues 939–959 (WVIGGVSSHLFAVFQGLLKVI). Residues 960–987 (AGIDTSFTVTSKGGDDEEFSELYTFKWT) lie on the Extracellular side of the membrane. Residues 988–1008 (TLLIPPTTLLLLNFIGVVAGV) traverse the membrane as a helical segment. Residues 1009–1019 (SNAINNGYESW) lie on the Cytoplasmic side of the membrane. Residues 1020 to 1040 (GPLFGKLFFAFWVIVHLYPFL) form a helical membrane-spanning segment. Topologically, residues 1041–1049 (KGLVGRQNR) are extracellular. The helical transmembrane segment at 1050-1070 (TPTIVIVWSILLASIFSLLWV) threads the bilayer. The Cytoplasmic portion of the chain corresponds to 1071-1092 (RIDPFLAKNDGPLLEECGLDCN).

Belongs to the glycosyltransferase 2 family. Plant cellulose synthase subfamily. Mn(2+) is required as a cofactor. Zn(2+) serves as cofactor.

It localises to the cell membrane. It catalyses the reaction [(1-&gt;4)-beta-D-glucosyl](n) + UDP-alpha-D-glucose = [(1-&gt;4)-beta-D-glucosyl](n+1) + UDP + H(+). It functions in the pathway glycan metabolism; plant cellulose biosynthesis. Functionally, probable catalytic subunit of cellulose synthase terminal complexes ('rosettes'), required for beta-1,4-glucan microfibril crystallization, a major mechanism of the cell wall formation. This Oryza sativa subsp. indica (Rice) protein is Probable cellulose synthase A catalytic subunit 5 [UDP-forming] (CESA5).